The sequence spans 362 residues: Uracil-DNA glycosylase (362 aa).

The tract at residues 28–97 (ASVAPNDPTE…AGPTEDPNFA (70 aa)) is disordered. The active-site Proton acceptor is the aspartate 205.

It belongs to the uracil-DNA glycosylase (UDG) superfamily. UNG family.

Its subcellular location is the host nucleus. The catalysed reaction is Hydrolyzes single-stranded DNA or mismatched double-stranded DNA and polynucleotides, releasing free uracil.. Excises uracil residues from the DNA which can arise as a result of misincorporation of dUMP residues by DNA polymerase or deamination of cytosines. Therefore may reduce deleterious uracil incorporation into the viral genome, particularly in terminally differentiated cells which lack DNA repair enzymes. The chain is Uracil-DNA glycosylase (UL2) from Psittacid herpesvirus 1 (isolate Amazon parrot/-/97-0001/1997) (PsHV-1).